The sequence spans 300 residues: Protoheme IX farnesyltransferase 1 (300 aa).

9 helical membrane passes run 28-48, 54-74, 100-120, 122-142, 149-169, 176-196, 222-242, 243-263, and 280-300; these read VVALMLLTVLVGMCLAMPTIL, VAGLLGIAMMAGSAAALNHLI, ALLFAALLGCLGFVILYVFTN, LTAWLTFASLIGYALIYTAYL, NIVIGGLAGAMPPLLGWTAVT, ALLLVIIIFLWTPPHFWALAI, CILLYTILLAMACLLPVLVGM, SGPLYFVCSSLLSTGFIYKAW, and FSIYHLMLLFMALLLDHYLWA.

It belongs to the UbiA prenyltransferase family. Protoheme IX farnesyltransferase subfamily.

The protein resides in the cell inner membrane. It catalyses the reaction heme b + (2E,6E)-farnesyl diphosphate + H2O = Fe(II)-heme o + diphosphate. It participates in porphyrin-containing compound metabolism; heme O biosynthesis; heme O from protoheme: step 1/1. Converts heme B (protoheme IX) to heme O by substitution of the vinyl group on carbon 2 of heme B porphyrin ring with a hydroxyethyl farnesyl side group. The protein is Protoheme IX farnesyltransferase 1 of Shewanella sp. (strain ANA-3).